Consider the following 723-residue polypeptide: Nuclear hormone receptor HR96 (723 aa).

The nuclear receptor DNA-binding region spans 4–79 (PKNCAVCGDK…IGMKSENIMS (76 aa)). NR C4-type zinc fingers lie at residues 7–27 (CAVCGDKALGYNFNAVTCESC) and 43–67 (CPFNQNCDITVVTRRFCQKCRLRKC). The segment at 95 to 163 (AKRRLMENGT…QASSPGTQVN (69 aa)) is disordered. 2 stretches are compositionally biased toward polar residues: residues 122 to 142 (DSSSSNLDHYSGSQDSQSCGS) and 151 to 163 (SGRQASSPGTQVN). Positions 483-723 (EQMKLRELRL…LREIFDLKNH (241 aa)) constitute an NR LBD domain.

Belongs to the nuclear hormone receptor family. NR1 subfamily.

The protein localises to the nucleus. Functionally, binds selectively to the HSP27 20E response element. The protein is Nuclear hormone receptor HR96 (Hr96) of Drosophila melanogaster (Fruit fly).